The following is a 273-amino-acid chain: Putative pyruvate, phosphate dikinase regulatory protein 2 (273 aa).

Position 151–158 (151–158) interacts with ADP; the sequence is GVSRTSKT.

Belongs to the pyruvate, phosphate/water dikinase regulatory protein family. PDRP subfamily.

It carries out the reaction N(tele)-phospho-L-histidyl/L-threonyl-[pyruvate, phosphate dikinase] + ADP = N(tele)-phospho-L-histidyl/O-phospho-L-threonyl-[pyruvate, phosphate dikinase] + AMP + H(+). The catalysed reaction is N(tele)-phospho-L-histidyl/O-phospho-L-threonyl-[pyruvate, phosphate dikinase] + phosphate + H(+) = N(tele)-phospho-L-histidyl/L-threonyl-[pyruvate, phosphate dikinase] + diphosphate. In terms of biological role, bifunctional serine/threonine kinase and phosphorylase involved in the regulation of the pyruvate, phosphate dikinase (PPDK) by catalyzing its phosphorylation/dephosphorylation. The chain is Putative pyruvate, phosphate dikinase regulatory protein 2 from Syntrophomonas wolfei subsp. wolfei (strain DSM 2245B / Goettingen).